A 247-amino-acid polypeptide reads, in one-letter code: Orotidine 5'-phosphate decarboxylase (247 aa).

Substrate contacts are provided by residues Asp-16, Lys-38, 66-75 (DLKFHDIPNT), Thr-130, Arg-191, Gln-200, Gly-220, and Arg-221. Lys-68 (proton donor) is an active-site residue.

Belongs to the OMP decarboxylase family. Type 1 subfamily. Homodimer.

It carries out the reaction orotidine 5'-phosphate + H(+) = UMP + CO2. It participates in pyrimidine metabolism; UMP biosynthesis via de novo pathway; UMP from orotate: step 2/2. Functionally, catalyzes the decarboxylation of orotidine 5'-monophosphate (OMP) to uridine 5'-monophosphate (UMP). This Rhodospirillum rubrum (strain ATCC 11170 / ATH 1.1.1 / DSM 467 / LMG 4362 / NCIMB 8255 / S1) protein is Orotidine 5'-phosphate decarboxylase.